We begin with the raw amino-acid sequence, 587 residues long: Ankyrin repeat and SOCS box protein 14 (587 aa).

11 ANK repeats span residues 81-110, 116-145, 149-178, 182-211, 215-244, 248-277, 281-310, 313-342, 355-384, 385-414, and 416-449; these read NGWL…PSTW, NGET…NPNA, EGNS…DVNL, NERT…YPDA, YGFT…DVHS, DSSS…DANI, SGHL…IAAI, SGIS…DVNF, QRKS…LPNQ, DPVN…NVNY, and CRVN…DTER. The region spanning 521–576 is the SOCS box domain; that stretch reads WPEIHFILANPRSLQHLCRLKIRKCMGRLRLRCPVFMSFLPLPNLLKAYVLYKEYD.

This sequence belongs to the ankyrin SOCS box (ASB) family. As to quaternary structure, interacts with MAPRE2; this interaction promotes MAPRE2 degradation.

It participates in protein modification; protein ubiquitination. Its function is as follows. May be a substrate-recognition component of a SCF-like ECS (Elongin-Cullin-SOCS-box protein) E3 ubiquitin-protein ligase complex which mediates the ubiquitination and subsequent proteasomal degradation of target proteins. Plays a role in the inhibition of cardiomyocyte nuclear proliferation by mediating the ubiquitination and degradation of MAPRE2. The protein is Ankyrin repeat and SOCS box protein 14 (Asb14) of Mus musculus (Mouse).